The chain runs to 318 residues: Deacetoxycephalosporin C hydroxylase (318 aa).

The region spanning 158–271 is the Fe2OG dioxygenase domain; sequence DADPVLRLRY…RTSSVFFLRP (114 aa).

This sequence belongs to the iron/ascorbate-dependent oxidoreductase family. Monomer. Requires Fe cation as cofactor.

The catalysed reaction is deacetoxycephalosporin C + 2-oxoglutarate + O2 = deacetylcephalosporin C + succinate + CO2. It participates in antibiotic biosynthesis; cephalosporin C biosynthesis. Hydroxylation of desacetoxicephalosporin C in 3'position to form deacetylcephalosporin C. The chain is Deacetoxycephalosporin C hydroxylase (cefF) from Streptomyces clavuligerus.